Here is a 562-residue protein sequence, read N- to C-terminus: 2-succinyl-5-enolpyruvyl-6-hydroxy-3-cyclohexene-1-carboxylate synthase (562 aa).

The protein belongs to the TPP enzyme family. MenD subfamily. Homodimer. The cofactor is Mg(2+). Requires Mn(2+) as cofactor. Thiamine diphosphate is required as a cofactor.

The catalysed reaction is isochorismate + 2-oxoglutarate + H(+) = 5-enolpyruvoyl-6-hydroxy-2-succinyl-cyclohex-3-ene-1-carboxylate + CO2. Its pathway is quinol/quinone metabolism; 1,4-dihydroxy-2-naphthoate biosynthesis; 1,4-dihydroxy-2-naphthoate from chorismate: step 2/7. It functions in the pathway cofactor biosynthesis; phylloquinone biosynthesis. Catalyzes the thiamine diphosphate-dependent decarboxylation of 2-oxoglutarate and the subsequent addition of the resulting succinic semialdehyde-thiamine pyrophosphate anion to isochorismate to yield 2-succinyl-5-enolpyruvyl-6-hydroxy-3-cyclohexene-1-carboxylate (SEPHCHC). The sequence is that of 2-succinyl-5-enolpyruvyl-6-hydroxy-3-cyclohexene-1-carboxylate synthase from Thermosynechococcus vestitus (strain NIES-2133 / IAM M-273 / BP-1).